Here is a 225-residue protein sequence, read N- to C-terminus: Cytidylate kinase (225 aa).

Residue 12–20 coordinates ATP; the sequence is GPSGAGKGT.

This sequence belongs to the cytidylate kinase family. Type 1 subfamily.

It is found in the cytoplasm. It catalyses the reaction CMP + ATP = CDP + ADP. It carries out the reaction dCMP + ATP = dCDP + ADP. The chain is Cytidylate kinase from Stenotrophomonas maltophilia (strain K279a).